Here is a 179-residue protein sequence, read N- to C-terminus: D-glycero-beta-D-manno-heptose-1,7-bisphosphate 7-phosphatase (179 aa).

The active-site Nucleophile is Asp-7. Residues Asp-7 and Asp-9 each contribute to the Mg(2+) site. Residue Asp-7 coordinates substrate. The active-site Proton donor is the Asp-9. Substrate-binding positions include 15–19, 50–53, and Arg-57; these read DSDAF and TNQS. Residues Cys-89, His-91, Cys-97, and Cys-99 each contribute to the Zn(2+) site. Arg-100 is a binding site for substrate. Mg(2+) is bound at residue Asp-126. Arg-129 provides a ligand contact to substrate.

In terms of assembly, monomer. Mg(2+) is required as a cofactor. Requires Zn(2+) as cofactor.

It localises to the cytoplasm. It catalyses the reaction D-glycero-beta-D-manno-heptose 1,7-bisphosphate + H2O = D-glycero-beta-D-manno-heptose 1-phosphate + phosphate. Its pathway is nucleotide-sugar biosynthesis; ADP-L-glycero-beta-D-manno-heptose biosynthesis; ADP-L-glycero-beta-D-manno-heptose from D-glycero-beta-D-manno-heptose 7-phosphate: step 2/4. It functions in the pathway bacterial outer membrane biogenesis; LPS core biosynthesis. Functionally, converts the D-glycero-beta-D-manno-heptose 1,7-bisphosphate (beta-HBP) intermediate into D-glycero-beta-D-manno-heptose 1-phosphate by removing the phosphate group at the C-7 position. This Bordetella bronchiseptica (strain ATCC BAA-588 / NCTC 13252 / RB50) (Alcaligenes bronchisepticus) protein is D-glycero-beta-D-manno-heptose-1,7-bisphosphate 7-phosphatase.